Reading from the N-terminus, the 250-residue chain is Triosephosphate isomerase (250 aa).

Position 9–11 (9–11) interacts with substrate; sequence NWK. The Electrophile role is filled by His95. Glu167 (proton acceptor) is an active-site residue. Residues Gly173, Ser213, and 234–235 each bind substrate; that span reads GG.

Belongs to the triosephosphate isomerase family. As to quaternary structure, homodimer.

The protein localises to the cytoplasm. It carries out the reaction D-glyceraldehyde 3-phosphate = dihydroxyacetone phosphate. Its pathway is carbohydrate biosynthesis; gluconeogenesis. It functions in the pathway carbohydrate degradation; glycolysis; D-glyceraldehyde 3-phosphate from glycerone phosphate: step 1/1. Functionally, involved in the gluconeogenesis. Catalyzes stereospecifically the conversion of dihydroxyacetone phosphate (DHAP) to D-glyceraldehyde-3-phosphate (G3P). The chain is Triosephosphate isomerase from Flavobacterium psychrophilum (strain ATCC 49511 / DSM 21280 / CIP 103535 / JIP02/86).